Here is a 214-residue protein sequence, read N- to C-terminus: Probable transaldolase (214 aa).

Lys83 serves as the catalytic Schiff-base intermediate with substrate.

The protein belongs to the transaldolase family. Type 3B subfamily.

It is found in the cytoplasm. It carries out the reaction D-sedoheptulose 7-phosphate + D-glyceraldehyde 3-phosphate = D-erythrose 4-phosphate + beta-D-fructose 6-phosphate. It functions in the pathway carbohydrate degradation; pentose phosphate pathway; D-glyceraldehyde 3-phosphate and beta-D-fructose 6-phosphate from D-ribose 5-phosphate and D-xylulose 5-phosphate (non-oxidative stage): step 2/3. In terms of biological role, transaldolase is important for the balance of metabolites in the pentose-phosphate pathway. The sequence is that of Probable transaldolase from Clostridium botulinum (strain Alaska E43 / Type E3).